Here is a 196-residue protein sequence, read N- to C-terminus: Pyridoxal 5'-phosphate synthase subunit PdxT (196 aa).

Glycine 52 to serine 54 contacts L-glutamine. Cysteine 84 acts as the Nucleophile in catalysis. Residues arginine 113 and isoleucine 141–arginine 142 contribute to the L-glutamine site. Catalysis depends on charge relay system residues histidine 178 and glutamate 180.

The protein belongs to the glutaminase PdxT/SNO family. As to quaternary structure, in the presence of PdxS, forms a dodecamer of heterodimers. Only shows activity in the heterodimer.

It catalyses the reaction aldehydo-D-ribose 5-phosphate + D-glyceraldehyde 3-phosphate + L-glutamine = pyridoxal 5'-phosphate + L-glutamate + phosphate + 3 H2O + H(+). The enzyme catalyses L-glutamine + H2O = L-glutamate + NH4(+). The protein operates within cofactor biosynthesis; pyridoxal 5'-phosphate biosynthesis. Its function is as follows. Catalyzes the hydrolysis of glutamine to glutamate and ammonia as part of the biosynthesis of pyridoxal 5'-phosphate. The resulting ammonia molecule is channeled to the active site of PdxS. The polypeptide is Pyridoxal 5'-phosphate synthase subunit PdxT (Pyrococcus abyssi (strain GE5 / Orsay)).